The primary structure comprises 448 residues: GTPase Der (448 aa).

EngA-type G domains are found at residues 3 to 167 and 182 to 355; these read PVIA…EPPE and TRLA…ASAT. GTP contacts are provided by residues 9–16, 56–60, 119–122, 188–195, 235–239, and 300–303; these read GRPNVGKS, DTGGF, NKAE, DTAGL, and NKWD. A KH-like domain is found at 356–440; it reads RKLPTPQLTR…PMRIELRASH (85 aa).

The protein belongs to the TRAFAC class TrmE-Era-EngA-EngB-Septin-like GTPase superfamily. EngA (Der) GTPase family. In terms of assembly, associates with the 50S ribosomal subunit.

Functionally, GTPase that plays an essential role in the late steps of ribosome biogenesis. The polypeptide is GTPase Der (Leptothrix cholodnii (strain ATCC 51168 / LMG 8142 / SP-6) (Leptothrix discophora (strain SP-6))).